The following is a 481-amino-acid chain: tRNA-2-methylthio-N(6)-dimethylallyladenosine synthase (481 aa).

Residues 24-140 (KKLFIESYGC…LPNLLNEVEE (117 aa)) enclose the MTTase N-terminal domain. Cys33, Cys69, Cys103, Cys178, Cys182, and Cys185 together coordinate [4Fe-4S] cluster. A Radical SAM core domain is found at 164–411 (MSNGITALVA…DLQQKHAWWR (248 aa)). In terms of domain architecture, TRAM spans 413 to 476 (EDFIGQTVEV…SGTLKGEAVG (64 aa)).

Belongs to the methylthiotransferase family. MiaB subfamily. As to quaternary structure, monomer. [4Fe-4S] cluster is required as a cofactor.

The protein localises to the cytoplasm. The catalysed reaction is N(6)-dimethylallyladenosine(37) in tRNA + (sulfur carrier)-SH + AH2 + 2 S-adenosyl-L-methionine = 2-methylsulfanyl-N(6)-dimethylallyladenosine(37) in tRNA + (sulfur carrier)-H + 5'-deoxyadenosine + L-methionine + A + S-adenosyl-L-homocysteine + 2 H(+). In terms of biological role, catalyzes the methylthiolation of N6-(dimethylallyl)adenosine (i(6)A), leading to the formation of 2-methylthio-N6-(dimethylallyl)adenosine (ms(2)i(6)A) at position 37 in tRNAs that read codons beginning with uridine. The chain is tRNA-2-methylthio-N(6)-dimethylallyladenosine synthase from Flavobacterium psychrophilum (strain ATCC 49511 / DSM 21280 / CIP 103535 / JIP02/86).